Reading from the N-terminus, the 160-residue chain is Phosphopantetheine adenylyltransferase (160 aa).

A substrate-binding site is contributed by threonine 9. Residues threonine 9–phenylalanine 10 and histidine 17 contribute to the ATP site. Residues lysine 41, leucine 73, and arginine 87 each coordinate substrate. ATP contacts are provided by residues glycine 88 to arginine 90, glutamate 98, and leucine 123 to threonine 129.

Belongs to the bacterial CoaD family. Homohexamer. The cofactor is Mg(2+).

Its subcellular location is the cytoplasm. It catalyses the reaction (R)-4'-phosphopantetheine + ATP + H(+) = 3'-dephospho-CoA + diphosphate. It functions in the pathway cofactor biosynthesis; coenzyme A biosynthesis; CoA from (R)-pantothenate: step 4/5. Functionally, reversibly transfers an adenylyl group from ATP to 4'-phosphopantetheine, yielding dephospho-CoA (dPCoA) and pyrophosphate. In Marinobacter nauticus (strain ATCC 700491 / DSM 11845 / VT8) (Marinobacter aquaeolei), this protein is Phosphopantetheine adenylyltransferase.